Consider the following 260-residue polypeptide: MDKNNQKKFVLVHGICHGAWCWYKVKAQLEAAGHSVTAVDLAASGVNMTSLDEIQTLKDYCKPLLEFLSSLGSDDDKVILVAHSMGGISASLAADIFPSKVAAIVFVAAFMPDISNPPAYVFQKLVKDVTQEVWMDTVFGKPDRPLEFALFGPEFMAKYLYNLSPLQDFELAKMSVRVSPFMTNNLAGTISFSEDRYGSVTRIYIVCGEDVAVPVDYQRGMINDFPVKEVLEIKDADHMPMFSKPQELCALLLEIADKYA.

Serine 84 serves as the catalytic Acyl-ester intermediate. Active-site charge relay system residues include aspartate 210 and histidine 238.

It belongs to the AB hydrolase superfamily. Methylesterase family.

It carries out the reaction methyl (indol-3-yl)acetate + H2O = (indol-3-yl)acetate + methanol + H(+). The catalysed reaction is methyl salicylate + H2O = salicylate + methanol + H(+). It functions in the pathway plant hormone biosynthesis. With respect to regulation, esterase activity is down-regulated by salicylic acid (SA). Methylesterase shown to have carboxylesterase activity, methyl indole-3-acetic acid (MeIAA) esterase activity and methyl salicylate (MeSA) esterase activity in vitro. Required to convert methyl salicylate (MeSA) to salicylic acid (SA) as part of the signal transduction pathways that activate systemic acquired resistance in systemic tissue. MeSA is believed to be an inactive form that needs to be demethylated to exert a biological effect. This Arabidopsis thaliana (Mouse-ear cress) protein is Methylesterase 7.